The chain runs to 621 residues: Chaperone protein HscA homolog (621 aa).

The protein belongs to the heat shock protein 70 family.

Its function is as follows. Chaperone involved in the maturation of iron-sulfur cluster-containing proteins. Has a low intrinsic ATPase activity which is markedly stimulated by HscB. This is Chaperone protein HscA homolog from Ralstonia nicotianae (strain ATCC BAA-1114 / GMI1000) (Ralstonia solanacearum).